A 515-amino-acid chain; its full sequence is GMP synthase [glutamine-hydrolyzing] (515 aa).

Residues 10 to 200 form the Glutamine amidotransferase type-1 domain; it reads TIIVLDFGSQ…VFGVCGCSEG (191 aa). Cysteine 87 serves as the catalytic Nucleophile. Residues histidine 174 and glutamate 176 contribute to the active site. The region spanning 201–390 is the GMPS ATP-PPase domain; the sequence is WNMENFIEVE…LGIPDEIVWR (190 aa). 228 to 234 is an ATP binding site; that stretch reads SGGVDSS.

In terms of assembly, homodimer.

The enzyme catalyses XMP + L-glutamine + ATP + H2O = GMP + L-glutamate + AMP + diphosphate + 2 H(+). It participates in purine metabolism; GMP biosynthesis; GMP from XMP (L-Gln route): step 1/1. Functionally, catalyzes the synthesis of GMP from XMP. This chain is GMP synthase [glutamine-hydrolyzing], found in Bacillus thuringiensis subsp. konkukian (strain 97-27).